Here is a 261-residue protein sequence, read N- to C-terminus: Uridine-cytidine kinase 2-B (261 aa).

29-37 (GGTASGKSS) lines the ATP pocket. The substrate site is built by Asp86, Tyr114, His119, Arg168, Arg178, and Gln186. Asp215 contacts ATP. A disordered region spans residues 238-261 (RQNGFQNGHGTPRQRRTSESSRPH).

Belongs to the uridine kinase family. Homotetramer.

The enzyme catalyses uridine + ATP = UMP + ADP + H(+). It catalyses the reaction cytidine + ATP = CMP + ADP + H(+). The protein operates within pyrimidine metabolism; CTP biosynthesis via salvage pathway; CTP from cytidine: step 1/3. It functions in the pathway pyrimidine metabolism; UMP biosynthesis via salvage pathway; UMP from uridine: step 1/1. Functionally, phosphorylates uridine and cytidine to uridine monophosphate and cytidine monophosphate. Does not phosphorylate deoxyribonucleosides or purine ribonucleosides. Can use ATP or GTP as a phosphate donor. This is Uridine-cytidine kinase 2-B (uck2b) from Danio rerio (Zebrafish).